A 90-amino-acid chain; its full sequence is DNA-binding protein HU-beta (90 aa).

Belongs to the bacterial histone-like protein family. Heterodimer of an alpha and a beta chain.

In terms of biological role, histone-like DNA-binding protein which is capable of wrapping DNA to stabilize it, and thus to prevent its denaturation under extreme environmental conditions. The protein is DNA-binding protein HU-beta (hupB) of Serratia marcescens.